Reading from the N-terminus, the 119-residue chain is Protein TusC (119 aa).

The protein belongs to the DsrF/TusC family. Heterohexamer, formed by a dimer of trimers. The hexameric TusBCD complex contains 2 copies each of TusB, TusC and TusD. The TusBCD complex interacts with TusE.

It localises to the cytoplasm. Functionally, part of a sulfur-relay system required for 2-thiolation of 5-methylaminomethyl-2-thiouridine (mnm(5)s(2)U) at tRNA wobble positions. This is Protein TusC from Shigella dysenteriae serotype 1 (strain Sd197).